The following is a 1032-amino-acid chain: MGRESRHYRKRSASRGRSGSRSRSRSPSDKRSKRGDDRRSRSRDRDRRRERSRSRDKRRSRSRDRKRLRRSRSRERDRSRERRRSRSRDRRRSRSRSRGRRSRSSSPGSKTKKTENRSRSKEKAEGGDSSKEKKKDKDDKEDEKEKDAGNFDQNKLEEEMRKRKERVEKWREEQRKKAMENIGELKKEIEEMKQGKKWSLEDDDDDEDDPAEAEKEGTEMEDEELDPLDAYMEEVKEEVKKFNMRSVKGGAGNEKKSGPTVTKVVTVVTTKKAVVDADKKKGELMENDQDAMEYSSEEEEVDLQTALTGYQTKQRKLLEPVDHGKIEYEPFRKNFYVEVPELAKMSQEEVNVFRLEMEGITVKGKGCPKPIKSWVQCGISMKILNSLKKHGYEKPTPIQTQAIPAIMSGRDLIGIAKTGSGKTIAFLLPMFRHIMDQRSLEEGEGPIAVIMTPTRELALQITKECKKFSKTLGLRVVCVYGGTGISEQIAELKRGAEIIVCTPGRMIDMLAANSGRVTNLRRVTYVVLDEADRMFDMGFEPQVMRIVDNVRPDRQTVMFSATFPRAMEALARRILSKPIEVQVGGRSVVCSDVEQQVIVIEEEKKFLKLLELLGHYQESGSVIIFVDKQEHADGLLKDLMRASYPCMSLHGGIDQYDRDSIINDFKNGTCKLLVATSVAARGLDVKHLILVVNYSCPNHYEDYVHRAGRTGRAGNKGYAYTFITEDQARYAGDIIKALELSGTAVPPDLEKLWSDFKDQQKAEGKIIKKSSGFSGKGFKFDETEQALANERKKLQKAALGLQDSDDEDAAVDIDEQIESMFNSKKRVKDMAAPGTSSVPAPTAGNAEKLEIAKRLALRINAQKNLGIESQVDVMQQATNAILRGGTILAPTVSAKTIAEQLAEKINAKLNYVPLEKQEEERQEGGQSESFKRYEEELEINDFPQTARWKVTSKEALQRISEYSEAAITIRGTYFPPGKEPKEGERKIYLAIESANELAVQKAKAEITRLIKEELIRLQNSYQPTNKGRYKVL.

The span at 1–24 shows a compositional bias: basic residues; sequence MGRESRHYRKRSASRGRSGSRSRS. Positions 1–227 are disordered; sequence MGRESRHYRK…TEMEDEELDP (227 aa). Glycine 2 carries the N-myristoyl glycine lipid modification. The span at 26 to 49 shows a compositional bias: basic and acidic residues; that stretch reads SPSDKRSKRGDDRRSRSRDRDRRR. Composition is skewed to basic residues over residues 50–73 and 81–103; these read ERSR…RSRS and ERRR…RRSR. Residues 112–200 are compositionally biased toward basic and acidic residues; it reads KKTENRSRSK…EMKQGKKWSL (89 aa). Residues 152–197 adopt a coiled-coil conformation; sequence DQNKLEEEMRKRKERVEKWREEQRKKAMENIGELKKEIEEMKQGKK. Residue lysine 186 forms a Glycyl lysine isopeptide (Lys-Gly) (interchain with G-Cter in SUMO2) linkage. Serine 199 is subject to Phosphoserine. Positions 201–211 are enriched in acidic residues; it reads EDDDDDEDDPA. Lysine 263 carries the post-translational modification N6-acetyllysine. Tyrosine 294 is modified (phosphotyrosine). Phosphoserine occurs at positions 295 and 296. Lysine 325 is covalently cross-linked (Glycyl lysine isopeptide (Lys-Gly) (interchain with G-Cter in SUMO2)). Serine 346 is modified (phosphoserine). Positions 372-400 match the Q motif motif; sequence KSWVQCGISMKILNSLKKHGYEKPTPIQT. The 179-residue stretch at 403–581 folds into the Helicase ATP-binding domain; that stretch reads IPAIMSGRDL…RRILSKPIEV (179 aa). 416–423 is a binding site for ATP; that stretch reads AKTGSGKT. Positions 529–532 match the DEAD box motif; the sequence is DEAD. Positions 592-753 constitute a Helicase C-terminal domain; the sequence is DVEQQVIVIE…AVPPDLEKLW (162 aa). The residue at position 776 (lysine 776) is an N6-acetyllysine. A Glycyl lysine isopeptide (Lys-Gly) (interchain with G-Cter in SUMO2) cross-link involves residue lysine 779. The residue at position 804 (serine 804) is a Phosphoserine. Lysine 904 carries the N6-acetyllysine modification. Residues lysine 908 and lysine 916 each participate in a glycyl lysine isopeptide (Lys-Gly) (interchain with G-Cter in SUMO2) cross-link. Residue serine 929 is modified to Phosphoserine.

Belongs to the DEAD box helicase family. DDX46/PRP5 subfamily. Component of the 17S U2 SnRNP complex, a ribonucleoprotein complex that contains small nuclear RNA (snRNA) U2 and a number of specific proteins. Within the 17S U2 SnRNP complex, DDX46 is part of the SF3B subcomplex, which is required for 'A' complex assembly formed by the stable binding of U2 snRNP to the branchpoint sequence in pre-mRNA. Recruited to the 17S U2 SnRNP complex following release of DDX42; DDX42 and DDX46 bind the SF3B subcomplex in a competitive manner.

The protein localises to the nucleus speckle. Its subcellular location is the nucleus. It localises to the cajal body. It carries out the reaction ATP + H2O = ADP + phosphate + H(+). Its function is as follows. Component of the 17S U2 SnRNP complex of the spliceosome, a large ribonucleoprotein complex that removes introns from transcribed pre-mRNAs. The 17S U2 SnRNP complex (1) directly participates in early spliceosome assembly and (2) mediates recognition of the intron branch site during pre-mRNA splicing by promoting the selection of the pre-mRNA branch-site adenosine, the nucleophile for the first step of splicing. Within the 17S U2 SnRNP complex, DDX46 plays essential roles during assembly of pre-spliceosome and proofreading of the branch site. This is Probable ATP-dependent RNA helicase DDX46 (Ddx46) from Mus musculus (Mouse).